Reading from the N-terminus, the 138-residue chain is Transcription antitermination protein NusB (138 aa).

The protein belongs to the NusB family.

Involved in transcription antitermination. Required for transcription of ribosomal RNA (rRNA) genes. Binds specifically to the boxA antiterminator sequence of the ribosomal RNA (rrn) operons. The sequence is that of Transcription antitermination protein NusB from Coxiella burnetii (strain CbuK_Q154) (Coxiella burnetii (strain Q154)).